A 199-amino-acid chain; its full sequence is 3-hexulose-6-phosphate isomerase (199 aa).

Positions 44–186 constitute an SIS domain; the sequence is LARQIVQPGR…FQSLWDHTEV (143 aa). Residues S62 and 101–106 each bind substrate; that span reads SGSGTT. The Proton acceptor role is filled by E166.

The protein belongs to the SIS family. PHI subfamily.

The enzyme catalyses D-arabino-hex-3-ulose 6-phosphate = beta-D-fructose 6-phosphate. It functions in the pathway one-carbon metabolism; formaldehyde assimilation via RuMP pathway; D-fructose 6-phosphate from D-ribulose 5-phosphate and formaldehyde: step 2/2. Its function is as follows. Catalyzes the isomerization between 3-hexulose 6-phosphate and fructose 6-phosphate. This chain is 3-hexulose-6-phosphate isomerase (rmpB), found in Mycobacterium gastri.